The sequence spans 240 residues: Myogenic factor 6 (240 aa).

In terms of domain architecture, bHLH spans 91 to 142 (DRRKAATLRERRRLKKINEAFEALKRRTVANPNQRLPKVEILRSAINYIERL).

Efficient DNA binding requires dimerization with another bHLH protein. As to expression, skeletal muscle.

It is found in the nucleus. In terms of biological role, involved in muscle differentiation (myogenic factor). Induces fibroblasts to differentiate into myoblasts. Probable sequence specific DNA-binding protein. This Xenopus laevis (African clawed frog) protein is Myogenic factor 6 (myf6).